Reading from the N-terminus, the 108-residue chain is Cell wall protein PGA48 (108 aa).

An N-terminal signal peptide occupies residues 1-17 (MFKFVIYLFTFIAFANA). N-linked (GlcNAc...) asparagine glycosylation is found at N18, N41, and N77. Residue N84 is the site of GPI-anchor amidated asparagine attachment. The propeptide at 85-108 (GASKLNLRSLAGAGLVAAIFIAFI) is removed in mature form.

This sequence belongs to the SED1 family. In terms of processing, the GPI-anchor is attached to the protein in the endoplasmic reticulum and serves to target the protein to the cell surface. There, the glucosamine-inositol phospholipid moiety is cleaved off and the GPI-modified mannoprotein is covalently attached via its lipidless GPI glycan remnant to the 1,6-beta-glucan of the outer cell wall layer.

The protein resides in the secreted. Its subcellular location is the cell wall. It localises to the membrane. In terms of biological role, cell wall protein that plays a role in adaptation and resistance to cell wall stress. In Candida albicans (strain SC5314 / ATCC MYA-2876) (Yeast), this protein is Cell wall protein PGA48 (PGA48).